The chain runs to 421 residues: Diaminopimelate decarboxylase (421 aa).

Lysine 63 is subject to N6-(pyridoxal phosphate)lysine. Pyridoxal 5'-phosphate contacts are provided by residues glycine 242 and glutamate 278 to arginine 281. Positions 281, 317, and 321 each coordinate substrate. The active-site Proton donor is cysteine 346. Substrate contacts are provided by glutamate 347 and tyrosine 375. Tyrosine 375 serves as a coordination point for pyridoxal 5'-phosphate.

The protein belongs to the Orn/Lys/Arg decarboxylase class-II family. LysA subfamily. Homodimer. Requires pyridoxal 5'-phosphate as cofactor.

The catalysed reaction is meso-2,6-diaminopimelate + H(+) = L-lysine + CO2. It participates in amino-acid biosynthesis; L-lysine biosynthesis via DAP pathway; L-lysine from DL-2,6-diaminopimelate: step 1/1. Functionally, specifically catalyzes the decarboxylation of meso-diaminopimelate (meso-DAP) to L-lysine. This is Diaminopimelate decarboxylase from Zymomonas mobilis subsp. mobilis (strain ATCC 31821 / ZM4 / CP4).